The sequence spans 215 residues: NADH-quinone oxidoreductase subunit C (215 aa).

The protein belongs to the complex I 30 kDa subunit family. NDH-1 is composed of 14 different subunits. Subunits NuoB, C, D, E, F, and G constitute the peripheral sector of the complex.

The protein localises to the cell inner membrane. It carries out the reaction a quinone + NADH + 5 H(+)(in) = a quinol + NAD(+) + 4 H(+)(out). NDH-1 shuttles electrons from NADH, via FMN and iron-sulfur (Fe-S) centers, to quinones in the respiratory chain. The immediate electron acceptor for the enzyme in this species is believed to be ubiquinone. Couples the redox reaction to proton translocation (for every two electrons transferred, four hydrogen ions are translocated across the cytoplasmic membrane), and thus conserves the redox energy in a proton gradient. The protein is NADH-quinone oxidoreductase subunit C of Bordetella parapertussis (strain 12822 / ATCC BAA-587 / NCTC 13253).